The following is a 344-amino-acid chain: MEKNTAPFVVDTAPTTPPDKLVAPSIEEVNSNPNELRALRGQGRYFGVSDDDKDAIKEAAPKCNNCSQRGHLKKDCPHIICSYCGATDDHYSRHCPKAIQCSKCDEVGHYRSQCPHKWKKVQCTLCKSKKHSKERCPSIWRAYILVDDNEKAKPKVLPFHTIYCYNCGGKGHFGDDCKEKRSSRVPNEDGSAFTGSNLSVELKQEYYRHMNRNSDENEDYQFSESIYDEDPLPRPSHKRHSQNDHSHSGRNKRRASNFHPPPYQKSNVIQPTIRGETLSLNNNISKNSRYQNTKVNVSSISENMYGSRYNPSTYVDNNSISNSSNYRNYNSYQPYRSGTLGKRR.

The interval 1-23 (MEKNTAPFVVDTAPTTPPDKLVA) is disordered. Residues S31 and S49 each carry the phosphoserine modification. 3 consecutive CCHC-type zinc fingers follow at residues 61–78 (PKCNNCSQRGHLKKDCPH), 99–116 (IQCSKCDEVGHYRSQCPH), and 162–179 (IYCYNCGGKGHFGDDCKE). Disordered regions lie at residues 227–274 (YDED…PTIR) and 312–344 (STYVDNNSISNSSNYRNYNSYQPYRSGTLGKRR). Positions 317 to 337 (NNSISNSSNYRNYNSYQPYRS) are enriched in low complexity.

It belongs to the AIR1 family. As to quaternary structure, component of the TRAMP complex (also called TRF4 complex) composed of at least HUL4, MTR4, PAP2/TRF4 and either AIR1 or AIR2. Interacts with HMT1 and NPL3. The interaction with NPL3 requires the presence of HMT1. Interacts directly with PAP2.

The protein resides in the nucleus. In terms of biological role, component of the TRAMP (TRF4) complex which has a poly(A) RNA polymerase activity and is involved in a post-transcriptional quality control mechanism limiting inappropriate expression of genetic information. Polyadenylation is required for the degradative activity of the exosome on several of its nuclear RNA substrates like cryptic transcripts generated by RNA polymerase II and III, or hypomethylated pre-tRNAi-Met. Both complexes polyadenylate RNA processing and degradation intermediates of snRNAs, snoRNAs and mRNAs that accumulate in strains lacking a functional exosome. AIR2 also inhibits the methylation of NPL3 mediated by HMT1 through its interaction with HMT1. The sequence is that of Protein AIR2 (AIR2) from Saccharomyces cerevisiae (strain ATCC 204508 / S288c) (Baker's yeast).